An 841-amino-acid chain; its full sequence is DNA ligase (841 aa).

NAD(+) contacts are provided by residues 54–58, 103–104, and glutamate 143; these read DAEYD and SL. Residue lysine 145 is the N6-AMP-lysine intermediate of the active site. Residues arginine 166, glutamate 203, lysine 321, and lysine 345 each coordinate NAD(+). Zn(2+) contacts are provided by cysteine 471, cysteine 474, cysteine 489, and cysteine 495. Residues 554–575 are disordered; the sequence is KTVAESDQMPSEGSSVGASGKH. Residues 561–570 show a composition bias toward polar residues; it reads QMPSEGSSVG. Residues 764-841 enclose the BRCT domain; the sequence is GINKAVAGKT…SEAELLTLLG (78 aa).

It belongs to the NAD-dependent DNA ligase family. LigA subfamily. The cofactor is Mg(2+). Mn(2+) is required as a cofactor.

The catalysed reaction is NAD(+) + (deoxyribonucleotide)n-3'-hydroxyl + 5'-phospho-(deoxyribonucleotide)m = (deoxyribonucleotide)n+m + AMP + beta-nicotinamide D-nucleotide.. Functionally, DNA ligase that catalyzes the formation of phosphodiester linkages between 5'-phosphoryl and 3'-hydroxyl groups in double-stranded DNA using NAD as a coenzyme and as the energy source for the reaction. It is essential for DNA replication and repair of damaged DNA. The sequence is that of DNA ligase from Neisseria meningitidis serogroup C / serotype 2a (strain ATCC 700532 / DSM 15464 / FAM18).